Consider the following 1058-residue polypeptide: Carbamoyl phosphate synthase large chain (1058 aa).

Residues 1-401 (MPKRTDIQKI…SLLKACRSLE (401 aa)) are carboxyphosphate synthetic domain. ATP contacts are provided by R129, R169, G175, G176, R208, I210, E215, G241, I242, H243, Q284, and E298. One can recognise an ATP-grasp 1 domain in the interval 133–327 (KQLMEELEQP…IAKLAAKIAV (195 aa)). The Mg(2+) site is built by Q284, E298, and N300. Positions 284, 298, and 300 each coordinate Mn(2+). An oligomerization domain region spans residues 402 to 546 (IGVHHNEIPE…YSTYGWENES (145 aa)). The tract at residues 547–929 (IRSDKESVLV…ALYKAFEASY (383 aa)) is carbamoyl phosphate synthetic domain. The 191-residue stretch at 671-861 (EQALKELDIP…MAQVATKLIL (191 aa)) folds into the ATP-grasp 2 domain. ATP contacts are provided by R707, S746, I748, E752, G777, V778, H779, S780, Q820, and E832. Residues Q820, E832, and N834 each contribute to the Mg(2+) site. Positions 820, 832, and 834 each coordinate Mn(2+). Positions 930-1058 (LHLPTFGNVV…ESRSFVTEAI (129 aa)) constitute an MGS-like domain. Residues 930–1058 (LHLPTFGNVV…ESRSFVTEAI (129 aa)) are allosteric domain.

This sequence belongs to the CarB family. Composed of two chains; the small (or glutamine) chain promotes the hydrolysis of glutamine to ammonia, which is used by the large (or ammonia) chain to synthesize carbamoyl phosphate. Tetramer of heterodimers (alpha,beta)4. Mg(2+) is required as a cofactor. The cofactor is Mn(2+).

The catalysed reaction is hydrogencarbonate + L-glutamine + 2 ATP + H2O = carbamoyl phosphate + L-glutamate + 2 ADP + phosphate + 2 H(+). It carries out the reaction hydrogencarbonate + NH4(+) + 2 ATP = carbamoyl phosphate + 2 ADP + phosphate + 2 H(+). It functions in the pathway amino-acid biosynthesis; L-arginine biosynthesis; carbamoyl phosphate from bicarbonate: step 1/1. The protein operates within pyrimidine metabolism; UMP biosynthesis via de novo pathway; (S)-dihydroorotate from bicarbonate: step 1/3. Large subunit of the glutamine-dependent carbamoyl phosphate synthetase (CPSase). CPSase catalyzes the formation of carbamoyl phosphate from the ammonia moiety of glutamine, carbonate, and phosphate donated by ATP, constituting the first step of 2 biosynthetic pathways, one leading to arginine and/or urea and the other to pyrimidine nucleotides. The large subunit (synthetase) binds the substrates ammonia (free or transferred from glutamine from the small subunit), hydrogencarbonate and ATP and carries out an ATP-coupled ligase reaction, activating hydrogencarbonate by forming carboxy phosphate which reacts with ammonia to form carbamoyl phosphate. The polypeptide is Carbamoyl phosphate synthase large chain (Streptococcus pneumoniae (strain ATCC BAA-255 / R6)).